A 620-amino-acid polypeptide reads, in one-letter code: Chaperone protein DnaK (620 aa).

Threonine 197 is subject to Phosphothreonine; by autocatalysis. Residues 591–620 (AQKLGEAMANKNNAEQPKKKDDDVIDAEVE) are disordered.

Belongs to the heat shock protein 70 family.

In terms of biological role, acts as a chaperone. The polypeptide is Chaperone protein DnaK (Helicobacter pylori (strain HPAG1)).